We begin with the raw amino-acid sequence, 102 residues long: Small ribosomal subunit protein uS10 (102 aa).

It belongs to the universal ribosomal protein uS10 family. As to quaternary structure, part of the 30S ribosomal subunit.

Involved in the binding of tRNA to the ribosomes. This is Small ribosomal subunit protein uS10 from Gluconacetobacter diazotrophicus (strain ATCC 49037 / DSM 5601 / CCUG 37298 / CIP 103539 / LMG 7603 / PAl5).